The chain runs to 566 residues: Peroxisomal leader peptide-processing protease (566 aa).

Residues 319-531 are serine protease; it reads ALAALLPPEV…LQPALQQYSQ (213 aa). Active-site charge relay system residues include His-372, Asp-408, and Ser-481.

It belongs to the peptidase S1B family. In terms of assembly, homodimer. Forms a heterodimer with the C-terminal cleavage product (45 kDa form). Forms a heterodimer with the N-terminal cleavage product (15 kDa form). Interacts with PEX5. Interacts with LONP2. In terms of processing, self-cleavage gives rise to an N-terminal 15-kDa fragment and C-terminal 45-kDa fragment upon import into the peroxisomes. The full-lengh TYSND1 is the active the proteolytic processing of PTS1- and PTS2-proteins and in self-cleavage, and intermolecular self-cleavage of TYSND1 down-regulates its protease activity.

It localises to the peroxisome. Its function is as follows. Peroxisomal protease that mediates both the removal of the leader peptide from proteins containing a PTS2 target sequence and processes several PTS1-containing proteins. Catalyzes the processing of PTS1-proteins involved in the peroxisomal beta-oxidation of fatty acids. In Homo sapiens (Human), this protein is Peroxisomal leader peptide-processing protease (TYSND1).